The sequence spans 332 residues: MLLLVLALLAVLFPAGDTQDAFPEPISYYVTQSSSFFNSTWAQNQASGWLGDIQIDGWNSDSGTIIFRKTWSKGNFSNDEILEMEELFRLYFLGFVKEVQELVSDFQLEYPFEIQGIAGCELHSGGAIVSFLMGAIEGLHFMSINNYSCLPAPEGGTRAQKFCALILQYKGICDIVENLLTKVCPRYLMSVLEAGKAALQKHVKPEAWLSQGPSPEPGYLQLVCHVSGFYPKPVWVMWMRGEQEQPETQRGDVLPNPDDTWYLRATLDVVAKEATGLSCRVKHSSLGGQDIILYWGNSSIGWIILAVFVSCLIVLLFYVLWFYKHWSYQDIL.

Positions 1–17 (MLLLVLALLAVLFPAGD) are cleaved as a signal peptide. The Extracellular segment spans residues 18–301 (TQDAFPEPIS…ILYWGNSSIG (284 aa)). N-linked (GlcNAc...) asparagine glycans are attached at residues Asn38, Asn75, and Asn146. Cystine bridges form between Cys120–Cys184, Cys149–Cys163, and Cys224–Cys279. An Ig-like domain is found at 185–295 (PRYLMSVLEA…LGGQDIILYW (111 aa)). N-linked (GlcNAc...) asparagine glycosylation is present at Asn297. The helical transmembrane segment at 302 to 322 (WIILAVFVSCLIVLLFYVLWF) threads the bilayer. Topologically, residues 323-332 (YKHWSYQDIL) are cytoplasmic. An Internalization signal motif is present at residues 328–331 (YQDI).

As to quaternary structure, heterodimer with B2M (beta-2-microglobulin). Interacts with saposin C.

Its subcellular location is the cell membrane. The protein localises to the endosome membrane. It localises to the lysosome membrane. Functionally, antigen-presenting protein that binds self and non-self lipid and glycolipid antigens and presents them to T-cell receptors on natural killer T-cells. The polypeptide is T-cell surface glycoprotein CD1b2 (CD1B2) (Cavia porcellus (Guinea pig)).